The following is a 520-amino-acid chain: Ribonuclease Y (520 aa).

A helical transmembrane segment spans residues 4 to 24 (TVWILISILLATVGAVVGFFV). The segment at 86 to 116 (KQENRLMQKEENLDRKDETLDKREQQLEKKE) is disordered. Residues 210-273 (TVSVVNLPND…ETARIALDKL (64 aa)) form the KH domain. The HD domain occupies 336-429 (VLKHSMEVAY…VAAADALSAA (94 aa)).

Belongs to the RNase Y family.

The protein resides in the cell membrane. Endoribonuclease that initiates mRNA decay. The sequence is that of Ribonuclease Y from Bacillus cereus (strain ATCC 10987 / NRS 248).